The sequence spans 659 residues: Forkhead box protein P1-B (659 aa).

Composition is skewed to polar residues over residues 1-16 (MMQESGTEAANGTAHQ) and 32-41 (KSTTPSSDIT). Disordered regions lie at residues 1-41 (MMQE…SDIT) and 229-263 (ENSVTNNGHRGLDLSSPSPVPLKNHNQHGSTNGQY). A C2H2-type zinc finger spans residues 289–314 (GVCKWPGCEAVFEDFQSFLKHLNNEH). A leucine-zipper region spans residues 331-352 (VQQLELQLAKDKERLQAMMTHL). The segment at 365–369 (PLNLV) is CTBP1-binding. The interval 379–413 (PAASPPLSLPQTPTTPTAPLTPLSQTHSVITPTSL) is disordered. The segment covering 387 to 404 (LPQTPTTPTAPLTPLSQT) has biased composition (low complexity). The segment at residues 448–538 (RPPFTYASLI…PQKISGSPAL (91 aa)) is a DNA-binding region (fork-head). The interval 590–659 (GAMDHGNSNG…EDDHGTEDML (70 aa)) is disordered. Over residues 595-605 (GNSNGSDSSPG) the composition is skewed to polar residues. Over residues 641–659 (PDFDHHRDYEDDHGTEDML) the composition is skewed to basic and acidic residues.

As to expression, shows complex and dynamic expression during early embryonic development. Prominent in many regions of the developing central nervous system, particularly in midbrain-hindbrain boundary, hindbrain and spinal cord. Strongly expressed in the retina, ear, branchial arches, hatching gland, heart, pronephric duct, gut, proctodeum, pectoral fin and swim bladder.

It localises to the nucleus. Functionally, transcriptional repressor. The sequence is that of Forkhead box protein P1-B (foxp1b) from Danio rerio (Zebrafish).